A 192-amino-acid polypeptide reads, in one-letter code: Crossover junction endodeoxyribonuclease RuvC (192 aa).

Residues D7, E67, and D140 contribute to the active site. Residues D7, E67, and D140 each coordinate Mg(2+). The segment at 158-192 (RQSGVPPRTNSRRKSGTGGSWEQFVRQSPNVVVRS) is disordered. Residues 182-192 (VRQSPNVVVRS) are compositionally biased toward polar residues.

This sequence belongs to the RuvC family. In terms of assembly, homodimer which binds Holliday junction (HJ) DNA. The HJ becomes 2-fold symmetrical on binding to RuvC with unstacked arms; it has a different conformation from HJ DNA in complex with RuvA. In the full resolvosome a probable DNA-RuvA(4)-RuvB(12)-RuvC(2) complex forms which resolves the HJ. Requires Mg(2+) as cofactor.

The protein localises to the cytoplasm. The catalysed reaction is Endonucleolytic cleavage at a junction such as a reciprocal single-stranded crossover between two homologous DNA duplexes (Holliday junction).. Its function is as follows. The RuvA-RuvB-RuvC complex processes Holliday junction (HJ) DNA during genetic recombination and DNA repair. Endonuclease that resolves HJ intermediates. Cleaves cruciform DNA by making single-stranded nicks across the HJ at symmetrical positions within the homologous arms, yielding a 5'-phosphate and a 3'-hydroxyl group; requires a central core of homology in the junction. The consensus cleavage sequence is 5'-(A/T)TT(C/G)-3'. Cleavage occurs on the 3'-side of the TT dinucleotide at the point of strand exchange. HJ branch migration catalyzed by RuvA-RuvB allows RuvC to scan DNA until it finds its consensus sequence, where it cleaves and resolves the cruciform DNA. The polypeptide is Crossover junction endodeoxyribonuclease RuvC (Chlorobium chlorochromatii (strain CaD3)).